The following is a 595-amino-acid chain: Inactive glycosyltransferase 25 family member 3 (595 aa).

The signal sequence occupies residues 1–22; the sequence is MRAARAAPLLQLLLLLGPWLEA. 4 N-linked (GlcNAc...) asparagine glycosylation sites follow: N75, N153, N237, and N360. The tract at residues 548–595 is disordered; that stretch reads DTETSSPWDDDSGRLISWSGSQKTLRSPRLDLTGSSGHSLQPQPRDEL. Residues 580-589 are compositionally biased toward polar residues; it reads TGSSGHSLQP. The short motif at 592 to 595 is the Prevents secretion from ER element; that stretch reads RDEL.

The protein belongs to the glycosyltransferase 25 family. As to expression, ubiquitous. Highly expressed in secretory and nervous tissues.

The protein localises to the endoplasmic reticulum lumen. Its function is as follows. Probable cell adhesion protein involved in leukocyte transmigration across the blood-brain barrier. Does not express any beta-galactosyltransferase activity in vitro. The protein is Inactive glycosyltransferase 25 family member 3 (CERCAM) of Homo sapiens (Human).